A 145-amino-acid chain; its full sequence is ATP synthase epsilon chain (145 aa).

The protein belongs to the ATPase epsilon chain family. In terms of assembly, F-type ATPases have 2 components, CF(1) - the catalytic core - and CF(0) - the membrane proton channel. CF(1) has five subunits: alpha(3), beta(3), gamma(1), delta(1), epsilon(1). CF(0) has three main subunits: a, b and c.

It localises to the cell inner membrane. Its function is as follows. Produces ATP from ADP in the presence of a proton gradient across the membrane. The sequence is that of ATP synthase epsilon chain from Francisella tularensis subsp. mediasiatica (strain FSC147).